The following is a 740-amino-acid chain: MVFGRITELFTAASSRLPAGSQSSVPYMPTGSSPDVGTSVSDSISIGNGGRKNCLRHSASLQDFSSYHGFDPEESILPREAISWGQNGSSFSKEKGSVPNGTNPSTRRKLIRAVMIVMCLFLFAFLVYIVSMYIYTNWSRGASRYYVVFDCGSTGTRAYVYQASINYKKDSSLPIVMKSLTEGISRKSRGRAYDRMETEPGFDKLVNNRTGLKTAIKPLIQWAEKQIPKNAHRTTSLFVYATAGVRRLRPADSSWILGNVWSILAKSPFTCRREWVKIISGTEEAYFGWTALNYQTSMLGALPKKATFGALDLGGSSLQVTFENEERTHNETNLNLRIGSVNHHLSAYSLAGYGLNDAFDRSVVHLLKKLPNVNKSDLIEGKLEMKHPCLNSGYNGQYICSQCASSVQGGKKGKSGVSIKLVGAPNWGECSALAKNAVNSSEWSNAKHGVDCDLQPCALPDGYPRPHGQFYAVSGFFVVYRFFNLSAEASLDDVLEKGREFCDKAWQVARTSVSPQPFIEQYCFRAPYIVSLLREGLYITDKQIIIGSGSITWTLGVALLESGKALSSTLGLKSYETLSMKINPIALISILILSLLLLLCALSRVSNCLPRFFRKSYLPLFRHNSTSASSVLNIPSPFRFQRWSPMSTGVKTPLSPTVRGSPRRPFSFGSSIQLMESSLYSSSSCVMHSCSSDSLGDIQYDSTGSFWSSPRRSQMRLQSRRSQSREDLSSSLADSHMLKM.

The Cytoplasmic portion of the chain corresponds to 1–113; that stretch reads MVFGRITELF…PSTRRKLIRA (113 aa). A helical membrane pass occupies residues 114 to 134; sequence VMIVMCLFLFAFLVYIVSMYI. Residues 135–581 are Extracellular-facing; the sequence is YTNWSRGASR…LKSYETLSMK (447 aa). Asn137 is a glycosylation site (N-linked (GlcNAc...) asparagine). 147-157 serves as a coordination point for ATP; the sequence is VVFDCGSTGTR. A glycan (N-linked (GlcNAc...) asparagine) is linked at Asn208. The active-site Proton acceptor is the Glu284. Position 309–319 (309–319) interacts with ATP; it reads GALDLGGSSLQ. 4 N-linked (GlcNAc...) asparagine glycosylation sites follow: Asn330, Asn374, Asn439, and Asn484. A helical membrane pass occupies residues 582–602; that stretch reads INPIALISILILSLLLLLCAL. At 603-740 the chain is on the cytoplasmic side; sequence SRVSNCLPRF…SLADSHMLKM (138 aa). Residues 706 to 740 form a disordered region; the sequence is FWSSPRRSQMRLQSRRSQSREDLSSSLADSHMLKM. The span at 708–721 shows a compositional bias: low complexity; sequence SSPRRSQMRLQSRR.

The protein belongs to the GDA1/CD39 NTPase family. The cofactor is Ca(2+). Detected in mature pollen grains. Also expressed in more diverse tissues such as roots, leaves, stems, pistils and sepals. More particularly expressed in the vascular bundle.

Its subcellular location is the membrane. The catalysed reaction is a ribonucleoside 5'-triphosphate + 2 H2O = a ribonucleoside 5'-phosphate + 2 phosphate + 2 H(+). In terms of biological role, catalyzes the hydrolysis of phosphoanhydride bonds of nucleoside tri- and di-phosphates. Involved in the regulation of pollen and anther development. This Arabidopsis thaliana (Mouse-ear cress) protein is Probable apyrase 7 (APY7).